A 100-amino-acid polypeptide reads, in one-letter code: uncharacterized protein (100 aa).

It is found in the virion. This is an uncharacterized protein from Acanthamoeba polyphaga mimivirus (APMV).